Here is a 466-residue protein sequence, read N- to C-terminus: MALNPDRLFSAEPGTREIARRLFASVEKLPIISPHGHTEPIWYARNEAFPDPASLFVKPDHYITRMLYSQGHSLESLGIASRDGRPSETDARKIWRLFATNWYLFRATPSRLWFEHAMETVFGITERLSQENADRIFDAIADQLTQPHMRPRALYDRFNIEAISTTDAATDPLIYHDEVIASGWHGRIIPAYRPDAAVDAGRPDFASEVEKLVGVAGTPLTWQGYLDAHRNRREYFKRRGATSSDHGHPTAQTADLSAGDASRLFDRVIKGNASTSDAEMFRAQMLTEMARMSIDDGLVMQIHPGSFRNHNPTVFERFGLDKGADIPRQTGFVDQLKPLLDAFGNDPRLTVILFTLDETALSRELAPLAGHYPALKLGPAWWFFDSPEGILRYRKLTTETAGFYNTVGFNDDTRAYLSIPARHDMARRVDCAYLAGLVADHRLEEDEAYEVAHDLAYRLAKQTYKL.

It belongs to the metallo-dependent hydrolases superfamily. Uronate isomerase family.

The enzyme catalyses D-glucuronate = D-fructuronate. It carries out the reaction aldehydo-D-galacturonate = keto-D-tagaturonate. It functions in the pathway carbohydrate metabolism; pentose and glucuronate interconversion. The protein is Uronate isomerase (uxaC) of Brucella melitensis biotype 1 (strain ATCC 23456 / CCUG 17765 / NCTC 10094 / 16M).